A 199-amino-acid polypeptide reads, in one-letter code: Probable nicotinate-nucleotide adenylyltransferase (199 aa).

Belongs to the NadD family.

The enzyme catalyses nicotinate beta-D-ribonucleotide + ATP + H(+) = deamido-NAD(+) + diphosphate. Its pathway is cofactor biosynthesis; NAD(+) biosynthesis; deamido-NAD(+) from nicotinate D-ribonucleotide: step 1/1. Catalyzes the reversible adenylation of nicotinate mononucleotide (NaMN) to nicotinic acid adenine dinucleotide (NaAD). The chain is Probable nicotinate-nucleotide adenylyltransferase from Roseiflexus castenholzii (strain DSM 13941 / HLO8).